A 449-amino-acid polypeptide reads, in one-letter code: Flavonol 7-O-beta-glucosyltransferase UGT74F1 (449 aa).

Residue H18 is the Proton acceptor of the active site. H18 is a binding site for an anthocyanidin. Residue D111 is the Charge relay of the active site. 9 residues coordinate UDP-alpha-D-glucose: T133, Q327, H342, W345, N346, S347, E350, D366, and Q367.

Belongs to the UDP-glycosyltransferase family.

It catalyses the reaction a 7-O-hydroxy-flavonol + UDP-alpha-D-glucose = a flavonol 7-O-beta-D-glucoside + UDP + H(+). Possesses quercetin 7-O-glucosyltransferase and 4'-O-glucosyltransferase activities in vitro. Also active in vitro on benzoates and benzoate derivatives. Has low affinity for the tryptophan precursor anthranilate. Catalyzes the formation of anthranilate glucose ester. Is a minor source of this activity in the plant. In Arabidopsis thaliana (Mouse-ear cress), this protein is Flavonol 7-O-beta-glucosyltransferase UGT74F1.